The primary structure comprises 413 residues: Multifunctional CCA protein (413 aa).

ATP-binding residues include Gly8 and Arg11. CTP contacts are provided by Gly8 and Arg11. Residues Asp21 and Asp23 each contribute to the Mg(2+) site. Arg91, Arg137, and Arg140 together coordinate ATP. Positions 91, 137, and 140 each coordinate CTP. The region spanning 228–329 is the HD domain; sequence TGIHTLMVLE…VKLFDKADLW (102 aa).

This sequence belongs to the tRNA nucleotidyltransferase/poly(A) polymerase family. Bacterial CCA-adding enzyme type 1 subfamily. Monomer. Can also form homodimers and oligomers. Mg(2+) is required as a cofactor. Ni(2+) serves as cofactor.

The catalysed reaction is a tRNA precursor + 2 CTP + ATP = a tRNA with a 3' CCA end + 3 diphosphate. It carries out the reaction a tRNA with a 3' CCA end + 2 CTP + ATP = a tRNA with a 3' CCACCA end + 3 diphosphate. Functionally, catalyzes the addition and repair of the essential 3'-terminal CCA sequence in tRNAs without using a nucleic acid template. Adds these three nucleotides in the order of C, C, and A to the tRNA nucleotide-73, using CTP and ATP as substrates and producing inorganic pyrophosphate. tRNA 3'-terminal CCA addition is required both for tRNA processing and repair. Also involved in tRNA surveillance by mediating tandem CCA addition to generate a CCACCA at the 3' terminus of unstable tRNAs. While stable tRNAs receive only 3'-terminal CCA, unstable tRNAs are marked with CCACCA and rapidly degraded. This chain is Multifunctional CCA protein, found in Shewanella loihica (strain ATCC BAA-1088 / PV-4).